Consider the following 1142-residue polypeptide: Coiled-coil domain-containing protein 40 (1142 aa).

2 disordered regions span residues 1–197 and 251–274; these read MAEP…QVLP and PSTE…AEDE. Basic and acidic residues-rich tracts occupy residues 11–27 and 35–55; these read SHPE…EGNN and PEKD…HPEE. Residues 63–96 show a composition bias toward acidic residues; sequence AIEEGEVETEGEAAVEGEEEAVSYGDAESEEEYY. Phosphoserine is present on Ser-252. Residues 265–274 show a composition bias toward acidic residues; sequence EGSDEEAEDE. 5 coiled-coil regions span residues 293–319, 349–470, 526–627, 684–950, and 1005–1054; these read AALK…ATKQ, HDRH…QAED, QAKS…LRRK, TSSR…LGQL, and VRKA…LTRL.

The protein belongs to the CCDC40 family.

It localises to the cytoplasm. Its subcellular location is the cell projection. The protein resides in the cilium. In terms of biological role, required for assembly of dynein regulatory complex (DRC) and inner dynein arm (IDA) complexes, which are responsible for ciliary beat regulation, thereby playing a central role in motility in cilia and flagella. Probably acts together with CCDC39 to form a molecular ruler that determines the 96 nanometer (nm) repeat length and arrangements of components in cilia and flagella. Not required for outer dynein arm complexes assembly. Required for axonemal recruitment of CCDC39. The polypeptide is Coiled-coil domain-containing protein 40 (Homo sapiens (Human)).